The chain runs to 407 residues: Imidazolonepropionase (407 aa).

His-74 and His-76 together coordinate Fe(3+). Zn(2+)-binding residues include His-74 and His-76. The 4-imidazolone-5-propanoate site is built by Arg-83, Tyr-146, and His-179. An N-formimidoyl-L-glutamate-binding site is contributed by Tyr-146. Fe(3+) is bound at residue His-244. His-244 lines the Zn(2+) pocket. Gln-247 provides a ligand contact to 4-imidazolone-5-propanoate. Asp-319 is a binding site for Fe(3+). Asp-319 serves as a coordination point for Zn(2+). N-formimidoyl-L-glutamate-binding residues include Asn-321 and Gly-323. Thr-324 is a 4-imidazolone-5-propanoate binding site.

This sequence belongs to the metallo-dependent hydrolases superfamily. HutI family. The cofactor is Zn(2+). Fe(3+) serves as cofactor.

The protein resides in the cytoplasm. It carries out the reaction 4-imidazolone-5-propanoate + H2O = N-formimidoyl-L-glutamate. Its pathway is amino-acid degradation; L-histidine degradation into L-glutamate; N-formimidoyl-L-glutamate from L-histidine: step 3/3. Its function is as follows. Catalyzes the hydrolytic cleavage of the carbon-nitrogen bond in imidazolone-5-propanoate to yield N-formimidoyl-L-glutamate. It is the third step in the universal histidine degradation pathway. This is Imidazolonepropionase from Salmonella schwarzengrund (strain CVM19633).